We begin with the raw amino-acid sequence, 129 residues long: Small ribosomal subunit protein uS13m (129 aa).

Residues 92–129 (HQDGSPLRGQRTHTNARTARKQIRKGNERRLPKEQATD) form a disordered region. Residues 116 to 129 (KGNERRLPKEQATD) are compositionally biased toward basic and acidic residues.

It belongs to the universal ribosomal protein uS13 family. In terms of assembly, part of the small ribosomal subunit.

It localises to the mitochondrion. Its function is as follows. Located at the top of the head of the small subunit, it contacts several helices of the 18S rRNA. This chain is Small ribosomal subunit protein uS13m (RPS13), found in Zea mays (Maize).